We begin with the raw amino-acid sequence, 251 residues long: Hydroxyacylglutathione hydrolase (251 aa).

The Zn(2+) site is built by His53, His55, Asp57, His58, His110, Asp127, and His165.

This sequence belongs to the metallo-beta-lactamase superfamily. Glyoxalase II family. Monomer. Zn(2+) serves as cofactor.

It catalyses the reaction an S-(2-hydroxyacyl)glutathione + H2O = a 2-hydroxy carboxylate + glutathione + H(+). Its pathway is secondary metabolite metabolism; methylglyoxal degradation; (R)-lactate from methylglyoxal: step 2/2. In terms of biological role, thiolesterase that catalyzes the hydrolysis of S-D-lactoyl-glutathione to form glutathione and D-lactic acid. In Edwardsiella ictaluri (strain 93-146), this protein is Hydroxyacylglutathione hydrolase.